We begin with the raw amino-acid sequence, 258 residues long: Phosphate import ATP-binding protein PstB (258 aa).

The region spanning 5 to 253 (LDLNDVNIYY…PTKKETEDYI (249 aa)) is the ABC transporter domain. 37–44 (GPSGCGKS) provides a ligand contact to ATP.

Belongs to the ABC transporter superfamily. Phosphate importer (TC 3.A.1.7) family. In terms of assembly, the complex is composed of two ATP-binding proteins (PstB), two transmembrane proteins (PstC and PstA) and a solute-binding protein (PstS).

It is found in the cell membrane. The enzyme catalyses phosphate(out) + ATP + H2O = ADP + 2 phosphate(in) + H(+). Functionally, part of the ABC transporter complex PstSACB involved in phosphate import. Responsible for energy coupling to the transport system. This chain is Phosphate import ATP-binding protein PstB, found in Corynebacterium jeikeium (strain K411).